We begin with the raw amino-acid sequence, 593 residues long: Methionine--tRNA ligase, mitochondrial (593 aa).

The N-terminal 29 residues, 1 to 29 (MLRTSVLRLLGRTGASRLSLLEDFGPRYY), are a transit peptide targeting the mitochondrion. The short motif at 52-62 (FYVNAAPHIGH) is the 'HIGH' region element. The 'KMSKS' region signature appears at 347-351 (KMSKS). Lys-350 lines the ATP pocket.

Belongs to the class-I aminoacyl-tRNA synthetase family.

The protein localises to the mitochondrion matrix. It catalyses the reaction tRNA(Met) + L-methionine + ATP = L-methionyl-tRNA(Met) + AMP + diphosphate. In Homo sapiens (Human), this protein is Methionine--tRNA ligase, mitochondrial (MARS2).